A 486-amino-acid chain; its full sequence is Palmitoyltransferase pfa4 (486 aa).

The Cytoplasmic portion of the chain corresponds to 1–15 (MTNLQTGPTTRGLQR). The helical transmembrane segment at 16-36 (FAIPAVCGLIIFLGYYSQYLF) threads the bilayer. Residues 37 to 51 (NTSADLAPGPLTCRE) lie on the Lumenal side of the membrane. Residues 52-72 (SLIFNILLVCLWLTYYQACTV) form a helical membrane-spanning segment. The Cytoplasmic segment spans residues 73–146 (DPGQYKFPPK…NCVSLQTFPH (74 aa)). Over residues 81-91 (PKEKEDGDNNN) the composition is skewed to basic and acidic residues. The interval 81-101 (PKEKEDGDNNNKRGGRGPQKA) is disordered. The 51-residue stretch at 102–152 (KWCKKCDAPKPPRAHHCRHCARCIPRMDHHCPWTGNCVSLQTFPHFLRFLV) folds into the DHHC domain. The active-site S-palmitoyl cysteine intermediate is Cys132. A helical membrane pass occupies residues 147 to 166 (FLRFLVYTNAALVYFARLLW). The Lumenal segment spans residues 167-178 (TRLYYGLWDQRH). The chain crosses the membrane as a helical span at residues 179–201 (VPAYLGPSVGALLGCTMLSIAWF). The Cytoplasmic portion of the chain corresponds to 202–486 (ATQFALMVLL…RKVKSNGVHE (285 aa)). Residues 314-420 (NDRVGMWPPP…QDGRAWMNSE (107 aa)) form a disordered region. 2 stretches are compositionally biased toward basic and acidic residues: residues 324 to 333 (DPEKLRRERA) and 346 to 376 (LNTE…DLRR). The segment covering 386–399 (EEDEIMAELEEDEG) has biased composition (acidic residues).

This sequence belongs to the DHHC palmitoyltransferase family. PFA4 subfamily.

It localises to the endoplasmic reticulum membrane. It carries out the reaction L-cysteinyl-[protein] + hexadecanoyl-CoA = S-hexadecanoyl-L-cysteinyl-[protein] + CoA. Functionally, mediates the reversible addition of palmitate to target proteins, thereby regulating their membrane association and biological function. This chain is Palmitoyltransferase pfa4, found in Neurospora crassa (strain ATCC 24698 / 74-OR23-1A / CBS 708.71 / DSM 1257 / FGSC 987).